Here is a 652-residue protein sequence, read N- to C-terminus: MESTTLASLAAVSVLAAGAQTDMSDVLWLLILGFVIAFILAFSVGANDVANSFGTAVGSGVVTLRQACILATIFETVGAMLLGAKVSETIRSGIIDVHMYNGSEAVLMAGSISAMFGSAVWQLAASFLKLPISGTHCIVGATIGFSMVARGHQGVKWLELLRIVASWFLSPLLSGIMSAVLFYFVRKFILNKDDPVPNGLRALPVFYAVTMGINLFSIMFTGAPMLGFDRIPWWGTLLISLGCAILTALVVWFIVCPRLKKKMQSKCLGPNIADTSGTQLVEKKPSSNGLMDHHPGPPRNYSPVPQTPPADSNKVAFDIGGSAETDLDKKEFDTKDQDCTHALNGSGGIVIPDLSGNQFHTVHKDSGIYKDLLHKLHLAKVGECIGEPVEKPIRRNNSYTSYTMAIYGIHGSLKDGEGGSRTGLDGEKRRSRYDSYNSYCTAVADGEAALEDAALAVGMEDEALREDVLEEDIDELEIDKPEVSTLFQFLQILTACFGSFAHGGNDVSNAIGPLVALWLIYDSASVAPSAPTPIWLLLYGGVGICTGLWIWGRRVIQTMGKDLTPITPSSGFSIELASAITVVVASNIGLPVSTTHCKVGSVVSVGWLRSRKAVDWHLFRNIFIAWFVTVPISGLISAAIMALFYYVILPLT.

Over 1-25 (MESTTLASLAAVSVLAAGAQTDMSD) the chain is Cytoplasmic. Residues 26-46 (VLWLLILGFVIAFILAFSVGA) traverse the membrane as a helical segment. Residues 47–66 (NDVANSFGTAVGSGVVTLRQ) lie on the Extracellular side of the membrane. The chain crosses the membrane as a helical span at residues 67-87 (ACILATIFETVGAMLLGAKVS). Topologically, residues 88-104 (ETIRSGIIDVHMYNGSE) are cytoplasmic. Residues 105–125 (AVLMAGSISAMFGSAVWQLAA) traverse the membrane as a helical segment. The Extracellular segment spans residues 126 to 162 (SFLKLPISGTHCIVGATIGFSMVARGHQGVKWLELLR). The chain crosses the membrane as a helical span at residues 163-183 (IVASWFLSPLLSGIMSAVLFY). The Cytoplasmic portion of the chain corresponds to 184–201 (FVRKFILNKDDPVPNGLR). Residues 202-222 (ALPVFYAVTMGINLFSIMFTG) traverse the membrane as a helical segment. Over 223-234 (APMLGFDRIPWW) the chain is Extracellular. Residues 235–255 (GTLLISLGCAILTALVVWFIV) traverse the membrane as a helical segment. The Cytoplasmic portion of the chain corresponds to 256-482 (CPRLKKKMQS…IDELEIDKPE (227 aa)). The disordered stretch occupies residues 278–308 (TQLVEKKPSSNGLMDHHPGPPRNYSPVPQTP). Basic and acidic residues predominate over residues 281 to 295 (VEKKPSSNGLMDHHP). Residues 297-308 (PPRNYSPVPQTP) are compositionally biased toward pro residues. A helical membrane pass occupies residues 483 to 503 (VSTLFQFLQILTACFGSFAHG). Over 504–531 (GNDVSNAIGPLVALWLIYDSASVAPSAP) the chain is Extracellular. Residues 532–552 (TPIWLLLYGGVGICTGLWIWG) traverse the membrane as a helical segment. Residues 553–571 (RRVIQTMGKDLTPITPSSG) lie on the Cytoplasmic side of the membrane. A helical transmembrane segment spans residues 572 to 592 (FSIELASAITVVVASNIGLPV). The Extracellular portion of the chain corresponds to 593 to 621 (STTHCKVGSVVSVGWLRSRKAVDWHLFRN). Residues 622–642 (IFIAWFVTVPISGLISAAIMA) traverse the membrane as a helical segment. The Cytoplasmic portion of the chain corresponds to 643 to 652 (LFYYVILPLT).

This sequence belongs to the inorganic phosphate transporter (PiT) (TC 2.A.20) family.

It localises to the membrane. Sodium-phosphate symporter which plays a fundamental housekeeping role in phosphate transport. This chain is Sodium-dependent phosphate transporter 1-A (slc20a1a), found in Danio rerio (Zebrafish).